The chain runs to 446 residues: Amino-acid acetyltransferase (446 aa).

Residues 299–438 (EQVRDAEIDD…QKLYNFQRKS (140 aa)) form the N-acetyltransferase domain.

Belongs to the acetyltransferase family. ArgA subfamily.

It localises to the cytoplasm. The enzyme catalyses L-glutamate + acetyl-CoA = N-acetyl-L-glutamate + CoA + H(+). Its pathway is amino-acid biosynthesis; L-arginine biosynthesis; N(2)-acetyl-L-ornithine from L-glutamate: step 1/4. In Aliivibrio fischeri (strain ATCC 700601 / ES114) (Vibrio fischeri), this protein is Amino-acid acetyltransferase.